The following is a 396-amino-acid chain: Putative glutamate--cysteine ligase 2-2 (396 aa).

Belongs to the glutamate--cysteine ligase type 2 family. YbdK subfamily.

The enzyme catalyses L-cysteine + L-glutamate + ATP = gamma-L-glutamyl-L-cysteine + ADP + phosphate + H(+). Functionally, ATP-dependent carboxylate-amine ligase which exhibits weak glutamate--cysteine ligase activity. The chain is Putative glutamate--cysteine ligase 2-2 from Mycolicibacterium smegmatis (strain ATCC 700084 / mc(2)155) (Mycobacterium smegmatis).